Reading from the N-terminus, the 145-residue chain is Hemoglobin fetal subunit beta (145 aa).

One can recognise a Globin domain in the interval 1–145 (MLSAEEKAAV…VANALAHRYH (145 aa)). Heme b-binding residues include histidine 62 and histidine 91.

It belongs to the globin family. Heterotetramer of two alpha chains and two beta chains. In terms of tissue distribution, red blood cells.

Functionally, involved in oxygen transport from the lung to the various peripheral tissues. This is Hemoglobin fetal subunit beta from Bos taurus (Bovine).